The following is a 327-amino-acid chain: Methionyl-tRNA formyltransferase (327 aa).

122-125 provides a ligand contact to (6S)-5,6,7,8-tetrahydrofolate; the sequence is SLLP.

This sequence belongs to the Fmt family.

It carries out the reaction L-methionyl-tRNA(fMet) + (6R)-10-formyltetrahydrofolate = N-formyl-L-methionyl-tRNA(fMet) + (6S)-5,6,7,8-tetrahydrofolate + H(+). Functionally, attaches a formyl group to the free amino group of methionyl-tRNA(fMet). The formyl group appears to play a dual role in the initiator identity of N-formylmethionyl-tRNA by promoting its recognition by IF2 and preventing the misappropriation of this tRNA by the elongation apparatus. The chain is Methionyl-tRNA formyltransferase from Ralstonia nicotianae (strain ATCC BAA-1114 / GMI1000) (Ralstonia solanacearum).